A 223-amino-acid chain; its full sequence is 2-C-methyl-D-erythritol 4-phosphate cytidylyltransferase (223 aa).

This sequence belongs to the IspD/TarI cytidylyltransferase family. IspD subfamily.

It catalyses the reaction 2-C-methyl-D-erythritol 4-phosphate + CTP + H(+) = 4-CDP-2-C-methyl-D-erythritol + diphosphate. It functions in the pathway isoprenoid biosynthesis; isopentenyl diphosphate biosynthesis via DXP pathway; isopentenyl diphosphate from 1-deoxy-D-xylulose 5-phosphate: step 2/6. Its function is as follows. Catalyzes the formation of 4-diphosphocytidyl-2-C-methyl-D-erythritol from CTP and 2-C-methyl-D-erythritol 4-phosphate (MEP). This Prochlorococcus marinus subsp. pastoris (strain CCMP1986 / NIES-2087 / MED4) protein is 2-C-methyl-D-erythritol 4-phosphate cytidylyltransferase.